A 552-amino-acid polypeptide reads, in one-letter code: Thermosome subunit beta (552 aa).

The protein belongs to the TCP-1 chaperonin family. As to quaternary structure, forms a Heterooligomeric complex of two stacked nine-membered rings; one of alpha and the other of beta subunits. The N-terminus is blocked.

Its function is as follows. Molecular chaperone; binds unfolded polypeptides in vitro, and has a weak ATPase activity. The polypeptide is Thermosome subunit beta (thsB) (Sulfurisphaera tokodaii (strain DSM 16993 / JCM 10545 / NBRC 100140 / 7) (Sulfolobus tokodaii)).